Consider the following 359-residue polypeptide: Archaemetzincin-2 (359 aa).

Histidine 254 provides a ligand contact to Zn(2+). Glutamate 255 serves as the catalytic Proton acceptor. Zn(2+) is bound by residues histidine 258, histidine 264, cysteine 265, cysteine 270, cysteine 289, and cysteine 292.

It belongs to the peptidase M54 family. It depends on Zn(2+) as a cofactor. As to expression, predominantly expressed in testis.

Functionally, probable zinc metalloprotease. This is Archaemetzincin-2 (Amz2) from Mus musculus (Mouse).